A 568-amino-acid chain; its full sequence is Urease subunit alpha (568 aa).

The region spanning 130 to 568 (GGIDTHIHFI…LPMAQRYFLF (439 aa)) is the Urease domain. His-135, His-137, and Lys-218 together coordinate Ni(2+). Lys-218 is modified (N6-carboxylysine). Position 220 (His-220) interacts with substrate. His-247 and His-273 together coordinate Ni(2+). His-321 (proton donor) is an active-site residue. Residue Asp-361 participates in Ni(2+) binding.

The protein belongs to the metallo-dependent hydrolases superfamily. Urease alpha subunit family. As to quaternary structure, heterotrimer of UreA (gamma), UreB (beta) and UreC (alpha) subunits. Three heterotrimers associate to form the active enzyme. Ni cation serves as cofactor. Carboxylation allows a single lysine to coordinate two nickel ions.

It localises to the cytoplasm. It catalyses the reaction urea + 2 H2O + H(+) = hydrogencarbonate + 2 NH4(+). The protein operates within nitrogen metabolism; urea degradation; CO(2) and NH(3) from urea (urease route): step 1/1. This chain is Urease subunit alpha, found in Burkholderia multivorans (strain ATCC 17616 / 249).